We begin with the raw amino-acid sequence, 450 residues long: Phosphoglucosamine mutase (450 aa).

Serine 102 functions as the Phosphoserine intermediate in the catalytic mechanism. Serine 102, aspartate 244, aspartate 246, and aspartate 248 together coordinate Mg(2+). A Phosphoserine modification is found at serine 102.

It belongs to the phosphohexose mutase family. Requires Mg(2+) as cofactor. Post-translationally, activated by phosphorylation.

The catalysed reaction is alpha-D-glucosamine 1-phosphate = D-glucosamine 6-phosphate. In terms of biological role, catalyzes the conversion of glucosamine-6-phosphate to glucosamine-1-phosphate. In Desulfovibrio desulfuricans (strain ATCC 27774 / DSM 6949 / MB), this protein is Phosphoglucosamine mutase.